Consider the following 442-residue polypeptide: GTPase HflX (442 aa).

The 177-residue stretch at 186–362 folds into the Hflx-type G domain; that stretch reads VLVALAGYTN…ALNRVVLKLP (177 aa). Residues 192–199, 217–221, 238–241, 306–309, and 341–343 each bind GTP; these read GYTNAGKS, FTTLD, DTVG, NKID, and SAR. The Mg(2+) site is built by Ser199 and Thr219.

This sequence belongs to the TRAFAC class OBG-HflX-like GTPase superfamily. HflX GTPase family. Monomer. Associates with the 50S ribosomal subunit. It depends on Mg(2+) as a cofactor.

It is found in the cytoplasm. Functionally, GTPase that associates with the 50S ribosomal subunit and may have a role during protein synthesis or ribosome biogenesis. The polypeptide is GTPase HflX (Thermococcus kodakarensis (strain ATCC BAA-918 / JCM 12380 / KOD1) (Pyrococcus kodakaraensis (strain KOD1))).